Here is a 140-residue protein sequence, read N- to C-terminus: Putative nickel-responsive regulator (140 aa).

The Ni(2+) site is built by His76, His87, His89, and Cys95.

Belongs to the transcriptional regulatory CopG/NikR family. It depends on Ni(2+) as a cofactor.

Its function is as follows. Transcriptional regulator. The polypeptide is Putative nickel-responsive regulator (Rhodopseudomonas palustris (strain BisB5)).